Consider the following 461-residue polypeptide: Argininosuccinate lyase (461 aa).

This sequence belongs to the lyase 1 family. Argininosuccinate lyase subfamily.

The protein resides in the cytoplasm. The catalysed reaction is 2-(N(omega)-L-arginino)succinate = fumarate + L-arginine. The protein operates within amino-acid biosynthesis; L-arginine biosynthesis; L-arginine from L-ornithine and carbamoyl phosphate: step 3/3. In Desulfitobacterium hafniense (strain DSM 10664 / DCB-2), this protein is Argininosuccinate lyase.